A 100-amino-acid polypeptide reads, in one-letter code: Integration host factor subunit alpha (100 aa).

Belongs to the bacterial histone-like protein family. As to quaternary structure, heterodimer of an alpha and a beta chain.

Functionally, this protein is one of the two subunits of integration host factor, a specific DNA-binding protein that functions in genetic recombination as well as in transcriptional and translational control. This is Integration host factor subunit alpha from Rhizorhabdus wittichii (strain DSM 6014 / CCUG 31198 / JCM 15750 / NBRC 105917 / EY 4224 / RW1) (Sphingomonas wittichii).